The chain runs to 1182 residues: Intraflagellar transport protein 122 homolog (1182 aa).

WD repeat units follow at residues 10-50 (KAEQ…QPLK), 51-91 (GHKD…LKYT), 93-129 (NDSI…VSKH), 131-169 (SSSK…KVKI), 174-217 (GSLS…IGKD), 219-258 (PLNF…LGTV), 260-300 (EQNS…HGLY), and 453-492 (KQAT…LLFQ).

Component of the IFT complex A (IFT-A) complex. IFT-A complex is divided into a core subcomplex composed of IFT122:IFT140:WDR19 which is associated with TULP3 and a peripheral subcomplex composed of IFT43:WDR35:TTC21B. Interacts with IFT43:WDR35; the interaction connects the 2 IFT-A subcomplexes. Interacts with IFTAP; the interaction associates IFTAP with IFT-A complex.

It localises to the cell projection. Its subcellular location is the cilium. The protein resides in the cytoplasm. The protein localises to the cytoskeleton. It is found in the cilium basal body. Its function is as follows. As a component of the IFT complex A (IFT-A), a complex required for retrograde ciliary transport and entry into cilia of G protein-coupled receptors (GPCRs), it is required in ciliogenesis and ciliary protein trafficking. Involved in cilia formation during neuronal patterning. Acts as a negative regulator of Shh signaling. Required to recruit TULP3 to primary cilia. The chain is Intraflagellar transport protein 122 homolog from Mus musculus (Mouse).